The following is a 742-amino-acid chain: Synaptic vesicle glycoprotein 2A (742 aa).

Positions 1–57 are interaction with SYT1; that stretch reads MEEGFRDRAAFIRGAKDIAKEVKKHAAKKVVKGLDRVQDEYSRRSYSRFEEEEDDDD. The Cytoplasmic segment spans residues 1–169; it reads MEEGFRDRAA…GHGRFQWTLY (169 aa). Residues 40–49 show a composition bias toward basic and acidic residues; sequence EYSRRSYSRF. Residues 40–145 form a disordered region; that stretch reads EYSRRSYSRF…RGEAQRRKDR (106 aa). Serine 80 and serine 81 each carry phosphoserine. Threonine 84 carries the post-translational modification Phosphothreonine. Residues 122 to 137 show a composition bias toward gly residues; sequence VRGGLSDGEGPPGGRG. Serine 127 is modified (phosphoserine). Residues 170-190 traverse the membrane as a helical segment; sequence FVLGLALMADGVEVFVVGFVL. Residues 191–205 are Extracellular-facing; it reads PSAEKDMCLSDSNKG. Residues 206-226 traverse the membrane as a helical segment; the sequence is MLGLIVYLGMMVGAFLWGGLA. Over 227-233 the chain is Cytoplasmic; that stretch reads DRLGRRQ. A helical transmembrane segment spans residues 234 to 254; that stretch reads CLLISLSVNSVFAFFSSFVQG. Over 255–262 the chain is Extracellular; the sequence is YGTFLFCR. A helical membrane pass occupies residues 263–283; it reads LLSGVGIGGSIPIVFSYFSEF. At 284-294 the chain is on the cytoplasmic side; sequence LAQEKRGEHLS. The chain crosses the membrane as a helical span at residues 295-315; that stretch reads WLCMFWMIGGVYAAAMAWAII. Residues 316-334 lie on the Extracellular side of the membrane; sequence PHYGWSFQMGSAYQFHSWR. A helical membrane pass occupies residues 335 to 355; sequence VFVLVCAFPSVFAIGALTTQP. At 356–447 the chain is on the cytoplasmic side; the sequence is ESPRFFLENG…CFSPEYRRIT (92 aa). Position 393 is a phosphoserine (serine 393). A helical transmembrane segment spans residues 448–468; sequence LMMMGVWFTMSFSYYGLTVWF. The Extracellular segment spans residues 469–598; it reads PDMIRHLQAV…GTGEGAYMVY (130 aa). The residue at position 480 (tyrosine 480) is a Phosphotyrosine. N-linked (GlcNAc...) asparagine glycosylation is found at asparagine 498 and asparagine 548. N-linked (GlcNAc...) asparagine; alternate glycosylation is present at asparagine 573. Asparagine 573 is a glycosylation site (N-linked (HexNAc...) asparagine; alternate). The chain crosses the membrane as a helical span at residues 599–619; the sequence is FVSFLGTLAVLPGNIVSALLM. Residues 620–626 lie on the Cytoplasmic side of the membrane; it reads DKIGRLR. Residues 627-647 form a helical membrane-spanning segment; it reads MLAGSSVLSCVSCFFLSFGNS. Residues 648–651 lie on the Extracellular side of the membrane; that stretch reads ESAM. The chain crosses the membrane as a helical span at residues 652 to 672; the sequence is IALLCLFGGVSIASWNALDVL. At 673–685 the chain is on the cytoplasmic side; sequence TVELYPSDKRTTA. Residues 686–708 form a helical membrane-spanning segment; that stretch reads FGFLNALCKLAAVLGISIFTSFV. At 709-712 the chain is on the extracellular side; the sequence is GITK. Residues 713 to 731 traverse the membrane as a helical segment; sequence AAPILFASAALALGSSLAL. Residues 732–742 are Cytoplasmic-facing; it reads KLPETRGQVLQ.

This sequence belongs to the major facilitator superfamily. In terms of assembly, interacts with SYT1/synaptotagmin-1 in a calcium-dependent manner. Binds the adapter protein complex AP-2. (Microbial infection) Interacts with C.botulinum neurotoxin type A1 and type A2 (BoNT/A, botA). Interaction is improved by glycosylation of SV2. As to quaternary structure, (Microbial infection) Copurifies with C.botulinum neurotoxin type B (BoNT/B, botB) and synaptotagmin 1 (SYT1). Interaction does not require glycosylation of SV2 or SYT1 proteins. Another group finds only copurification with SYT1 and SYT2. In terms of assembly, (Microbial infection) Interacts with C.botulinum neurotoxin type E (BoNT/E). Interaction requires glycosylation of SV2 proteins. (Microbial infection) Copurifies with C.botulinum neurotoxin type F (BoNT/F) and synaptotagmin 1 (SYT2). Another group finds only copurification with BoNT/F. Interaction requires SV2 glycosylation. Phosphorylation by CK1 of the N-terminal cytoplasmic domain regulates interaction with SYT1. In terms of processing, N-glycosylated, on at least 3 residues. In terms of tissue distribution, widely expressed throughout the brain (at protein level). Expressed by neural and endocrine cells of brain and spinal cord.

The protein resides in the presynapse. Its subcellular location is the cytoplasmic vesicle. It localises to the secretory vesicle. The protein localises to the synaptic vesicle membrane. Plays a role in the control of regulated secretion in neural and endocrine cells, enhancing selectively low-frequency neurotransmission. Positively regulates vesicle fusion by maintaining the readily releasable pool of secretory vesicles. Functionally, (Microbial infection) Receptor for C.botulinum neurotoxin type A (BoNT/A, botA); the toxin binds via extracellular loop 4. Restores uptake of BoNT/A in mouse cells that are deleted for SV2 receptor. Glycosylation of Asn-573 is not essential for receptor activity, but enhances uptake. Also serves as a receptor for the closely related C.botulinum neurotoxin type A2; glycosylation is not essential but enhances the interaction. Its function is as follows. Possible receptor for C.botulinum neurotoxin type D (BoNT/D, botD); BoNT/D does not bind to extracellular loop 4 as do BoNT/A and BoNT/E, nor to loop 1 or loop 3. Another group does not find a convincing interaction with SV2. In terms of biological role, (Microbial infection) Receptor for C.botulinum neurotoxin type E (BoNT/E); the toxin probably binds via extracellular loop 4 and requires glycosylation of Asn-573. Restores uptake of BoNT/E in mouse cells that are deleted for SV2 receptor. (Microbial infection) Receptor for C.botulinum neurotoxin type F (BoNT/F). Binding requires glycosylation of Asn-573. The sequence is that of Synaptic vesicle glycoprotein 2A (Sv2a) from Rattus norvegicus (Rat).